We begin with the raw amino-acid sequence, 314 residues long: Homoserine O-succinyltransferase (314 aa).

Cysteine 142 (acyl-thioester intermediate) is an active-site residue. Residues lysine 163 and serine 192 each contribute to the substrate site. Histidine 235 acts as the Proton acceptor in catalysis. The active site involves glutamate 237. Arginine 249 provides a ligand contact to substrate.

It belongs to the MetA family.

The protein resides in the cytoplasm. It catalyses the reaction L-homoserine + succinyl-CoA = O-succinyl-L-homoserine + CoA. It functions in the pathway amino-acid biosynthesis; L-methionine biosynthesis via de novo pathway; O-succinyl-L-homoserine from L-homoserine: step 1/1. Functionally, transfers a succinyl group from succinyl-CoA to L-homoserine, forming succinyl-L-homoserine. This is Homoserine O-succinyltransferase from Photobacterium profundum (strain SS9).